A 406-amino-acid polypeptide reads, in one-letter code: Dual-specificity RNA methyltransferase RlmN (406 aa).

Glutamate 121 functions as the Proton acceptor in the catalytic mechanism. One can recognise a Radical SAM core domain in the interval 127-377 (ERDRGTLCVS…VRTPRGRDIL (251 aa)). Cysteine 134 and cysteine 380 form a disulfide bridge. 3 residues coordinate [4Fe-4S] cluster: cysteine 141, cysteine 145, and cysteine 148. S-adenosyl-L-methionine-binding positions include 206-207 (GE), serine 238, 260-262 (SLH), and asparagine 337. Cysteine 380 serves as the catalytic S-methylcysteine intermediate.

The protein belongs to the radical SAM superfamily. RlmN family. [4Fe-4S] cluster is required as a cofactor.

The protein resides in the cytoplasm. The catalysed reaction is adenosine(2503) in 23S rRNA + 2 reduced [2Fe-2S]-[ferredoxin] + 2 S-adenosyl-L-methionine = 2-methyladenosine(2503) in 23S rRNA + 5'-deoxyadenosine + L-methionine + 2 oxidized [2Fe-2S]-[ferredoxin] + S-adenosyl-L-homocysteine. It carries out the reaction adenosine(37) in tRNA + 2 reduced [2Fe-2S]-[ferredoxin] + 2 S-adenosyl-L-methionine = 2-methyladenosine(37) in tRNA + 5'-deoxyadenosine + L-methionine + 2 oxidized [2Fe-2S]-[ferredoxin] + S-adenosyl-L-homocysteine. Its function is as follows. Specifically methylates position 2 of adenine 2503 in 23S rRNA and position 2 of adenine 37 in tRNAs. m2A2503 modification seems to play a crucial role in the proofreading step occurring at the peptidyl transferase center and thus would serve to optimize ribosomal fidelity. The protein is Dual-specificity RNA methyltransferase RlmN of Azorhizobium caulinodans (strain ATCC 43989 / DSM 5975 / JCM 20966 / LMG 6465 / NBRC 14845 / NCIMB 13405 / ORS 571).